The chain runs to 56 residues: Small ribosomal subunit protein uS14 (56 aa).

Residues C21, C24, C39, and C42 each coordinate Zn(2+).

It belongs to the universal ribosomal protein uS14 family. Component of the small ribosomal subunit (SSU). Mature N.crassa ribosomes consist of a small (40S) and a large (60S) subunit. The 40S small subunit contains 1 molecule of ribosomal RNA (18S rRNA) and at least 32 different proteins. The large 60S subunit contains 3 rRNA molecules (26S, 5.8S and 5S rRNA) and at least 42 different proteins. Zn(2+) is required as a cofactor.

Its subcellular location is the cytoplasm. Functionally, component of the ribosome, a large ribonucleoprotein complex responsible for the synthesis of proteins in the cell. The small ribosomal subunit (SSU) binds messenger RNAs (mRNAs) and translates the encoded message by selecting cognate aminoacyl-transfer RNA (tRNA) molecules. The large subunit (LSU) contains the ribosomal catalytic site termed the peptidyl transferase center (PTC), which catalyzes the formation of peptide bonds, thereby polymerizing the amino acids delivered by tRNAs into a polypeptide chain. The nascent polypeptides leave the ribosome through a tunnel in the LSU and interact with protein factors that function in enzymatic processing, targeting, and the membrane insertion of nascent chains at the exit of the ribosomal tunnel. This chain is Small ribosomal subunit protein uS14 (rps-29), found in Neurospora crassa (strain ATCC 24698 / 74-OR23-1A / CBS 708.71 / DSM 1257 / FGSC 987).